Here is a 231-residue protein sequence, read N- to C-terminus: Probable methylthioribulose-1-phosphate dehydratase (231 aa).

C90 contacts substrate. Zn(2+) is bound by residues H108 and H110. The active-site Proton donor/acceptor is E132. H188 contacts Zn(2+).

It belongs to the aldolase class II family. MtnB subfamily. Requires Zn(2+) as cofactor.

It localises to the cytoplasm. The catalysed reaction is 5-(methylsulfanyl)-D-ribulose 1-phosphate = 5-methylsulfanyl-2,3-dioxopentyl phosphate + H2O. It participates in amino-acid biosynthesis; L-methionine biosynthesis via salvage pathway; L-methionine from S-methyl-5-thio-alpha-D-ribose 1-phosphate: step 2/6. Functionally, catalyzes the dehydration of methylthioribulose-1-phosphate (MTRu-1-P) into 2,3-diketo-5-methylthiopentyl-1-phosphate (DK-MTP-1-P). In Anopheles gambiae (African malaria mosquito), this protein is Probable methylthioribulose-1-phosphate dehydratase.